Consider the following 92-residue polypeptide: UPF0250 protein PD_0532 (92 aa).

The protein belongs to the UPF0250 family.

In Xylella fastidiosa (strain Temecula1 / ATCC 700964), this protein is UPF0250 protein PD_0532.